Reading from the N-terminus, the 176-residue chain is MATATDRAPHQVQVHTPTTQRVDVPRRGYDVSGGGIKTLLPERGPSTSQIIAVLVGVPTGGTLLLLSGLSLLGTIIGLAIATPVFIFFSPVIVPAVVTIGLAVTGILTAGACGLTGLMSLSWMINFIRQVHGTTVPDQLDSVKRRMADMADYVGQKTKDAGQEIQTKAQDVKRSSS.

Position 2 is an N-acetylalanine; alternate (A2). A run of 3 helical transmembrane segments spans residues 50–70 (IIAV…SGLS), 75–95 (IIGL…IVPA), and 96–116 (VVTI…GLTG). The interval 156–176 (KTKDAGQEIQTKAQDVKRSSS) is disordered.

The protein belongs to the oleosin family. Expressed in seeds (at protein level).

It is found in the lipid droplet. The protein localises to the membrane. May have a structural role to stabilize the lipid body during desiccation of the seed by preventing coalescence of the oil. Probably interacts with both lipid and phospholipid moieties of lipid bodies. May also provide recognition signals for specific lipase anchorage in lipolysis during seedling growth. This is Oleosin Ara h 14.0103 from Arachis hypogaea (Peanut).